A 299-amino-acid polypeptide reads, in one-letter code: Non-structural protein V (299 aa).

Positions 40-98 (SDNPGQEQATCKEEEAGASGLSKPCLSAIGSTEGGAPRIRGQGSGESDDDTETLGFPSR) are disordered. An interaction with host STAT1 region spans residues 110–120 (YYVYDHSGEAV). A compositionally biased stretch (low complexity) spans 134–145 (GLDGDSTLSGGD). Disordered regions lie at residues 134–174 (GLDG…APIS) and 204–230 (PKLGKTLNVPPPPDPGRASTSETPIKK). Acidic residues predominate over residues 146–160 (NESENSDVDIGEPDT). Zn(2+) is bound by residues His232, Cys251, Cys255, Cys267, Cys269, Cys272, Cys276, and Cys279.

It belongs to the paramyxoviruses V protein family. Interacts with host IFIH1/MDA5 and DHX58/LGP2; these interactions are involved in the inhibition of the host type I interferon signaling pathway. Interacts with host TYK2; this interaction inhibits the type I interferon signaling pathway without affecting the type II pathway. Interacts with host IRF7; this interaction inhibits IRF7 translocation to the nucleus. Interacts with host CHUK. Interacts with host RELA/p65; this interaction inhibits the nuclear translocation of NF-KappaB. Interacts (via N-terminus) with host STAT1 and JAK1; these interactions inhibit STAT1 phosphorylation by Jak1 and thereby the type I interferon signaling pathway. Interacts (via C-terminus) with host STAT2; this interaction is involved in the inhibition of the host type I interferon signaling pathway. Forms a complex with host PPP1CA and PPP1CC; this interaction prevents dephosphorylation of host IFIH1/MDA5 and leads to the inhibition of the host type I interferon signaling pathway. Interacts with host IRF9; this interaction prevents the binding of IRF9 to STAT2 and thereby the type I interferon signaling pathway. Interacts with host RIGI regulatory protein (via CARDs domain) and host TRIM25 (via SPRY domain); these interactions prevent TRIM25-mediated ubiquitination of RIG-I and disrupts downstream RIG-I signaling.

It localises to the host cytoplasm. Functionally, plays an essential role in the inhibition of host immune response. Prevents the establishment of cellular antiviral state by blocking interferon-alpha/beta (IFN-alpha/beta) production and signaling pathway. Interacts with host IFIH1/MDA5 and DHX58/LGP2 to inhibit the transduction pathway involved in the activation of IFN-beta promoter, thus protecting the virus against cell antiviral state. Blocks the type I interferon signaling pathway by interacting with host TYK2 and thereby inhibiting downstream STAT1 and STAT2 phosphorylation. Blocks the type I interferon signaling pathway by disrupting the RIG-I signaling pathway. Moderately affects the type II interferon signaling. Prevents PP1alpha/gamma-mediated dephosphorylation of host IFIH1/MDA5 and thus blocks its activation. This Measles virus (strain IP-3-Ca) (MeV) protein is Non-structural protein V (P/V).